A 441-amino-acid polypeptide reads, in one-letter code: Zinc finger and BTB domain-containing protein 8A (441 aa).

The BTB domain maps to 24-92; the sequence is CDCSILVEGK…VYSGKLSLTG (69 aa). Positions 135-248 are disordered; it reads LSDKDTGSNG…HVSQSEEQVQ (114 aa). Serine 161 and serine 167 each carry phosphoserine. Glycyl lysine isopeptide (Lys-Gly) (interchain with G-Cter in SUMO2) cross-links involve residues lysine 178, lysine 182, and lysine 199. Composition is skewed to basic and acidic residues over residues 198 to 208 and 227 to 242; these read AKHEQRKDPIK and GKGD…HVSQ. 2 consecutive C2H2-type zinc fingers follow at residues 282–304 and 310–333; these read FKCP…LRCH and YPCQ…RTIH. Lysine 437 participates in a covalent cross-link: Glycyl lysine isopeptide (Lys-Gly) (interchain with G-Cter in SUMO2).

The protein localises to the nucleus. May be involved in transcriptional regulation. The sequence is that of Zinc finger and BTB domain-containing protein 8A (Zbtb8a) from Rattus norvegicus (Rat).